Here is a 659-residue protein sequence, read N- to C-terminus: DNA ligase (659 aa).

Residues 32–36 (DFEYD), 81–82 (SL), and Glu111 each bind NAD(+). Lys113 acts as the N6-AMP-lysine intermediate in catalysis. NAD(+) contacts are provided by Arg134, Glu168, Lys280, and Lys304. Positions 398, 401, 416, and 421 each coordinate Zn(2+). The BRCT domain occupies 585–655 (ETNSIYFQKR…KELNIPIINE (71 aa)).

This sequence belongs to the NAD-dependent DNA ligase family. LigA subfamily. The cofactor is Mg(2+). Mn(2+) serves as cofactor.

The enzyme catalyses NAD(+) + (deoxyribonucleotide)n-3'-hydroxyl + 5'-phospho-(deoxyribonucleotide)m = (deoxyribonucleotide)n+m + AMP + beta-nicotinamide D-nucleotide.. Functionally, DNA ligase that catalyzes the formation of phosphodiester linkages between 5'-phosphoryl and 3'-hydroxyl groups in double-stranded DNA using NAD as a coenzyme and as the energy source for the reaction. It is essential for DNA replication and repair of damaged DNA. The polypeptide is DNA ligase (Mycoplasma genitalium (strain ATCC 33530 / DSM 19775 / NCTC 10195 / G37) (Mycoplasmoides genitalium)).